The following is a 183-amino-acid chain: Ubiquinol-cytochrome c reductase iron-sulfur subunit (183 aa).

The chain crosses the membrane as a helical span at residues 21-41; that stretch reads LIYGTTAVGAVGVALAVWPFI. A Rieske domain is found at 88 to 181; sequence IVVARAVDPA…YAFTDDTTVL (94 aa). Residues C121, H123, C145, and H148 each coordinate [2Fe-2S] cluster. Residues C126 and C147 are joined by a disulfide bond.

This sequence belongs to the Rieske iron-sulfur protein family. In terms of assembly, the main subunits of complex b-c1 are: cytochrome b, cytochrome c1 and the Rieske protein. [2Fe-2S] cluster is required as a cofactor.

The protein resides in the cell inner membrane. It carries out the reaction a quinol + 2 Fe(III)-[cytochrome c](out) = a quinone + 2 Fe(II)-[cytochrome c](out) + 2 H(+)(out). Its function is as follows. Component of the ubiquinol-cytochrome c reductase complex (complex III or cytochrome b-c1 complex), which is a respiratory chain that generates an electrochemical potential coupled to ATP synthesis. The sequence is that of Ubiquinol-cytochrome c reductase iron-sulfur subunit (petA) from Rhodospirillum rubrum.